The sequence spans 1034 residues: FERM domain-containing protein 4B (1034 aa).

The FERM domain occupies 59 to 361 (RHCQVHLLDD…SQHQFYLDRK (303 aa)). Position 372 is a phosphoserine (Ser372). Coiled coils occupy residues 417–450 (EVSEEQKREKILELKKKEKLLQEKLLKKVEELKK) and 531–561 (KKKRKQDYTDAMKKLQEIENAINEYRIRCGK). Residues 542–971 (MKKLQEIENA…TQLTIGLSDY (430 aa)) are necessary for adherens junction and tight junction localization. Low complexity predominate over residues 576–589 (PSESSSLSDTTTYD). Disordered stretches follow at residues 576–614 (PSESSSLSDTTTYDDPSDAFTFPGQRSSSVPHSPRILPP), 635–698 (DTRQ…LESQ), 712–735 (FSLSKSQRSSSTEILDDGSSYTSQ), and 752–786 (TTQTLDTRTRGRRRSKKQNVSTSNSGSMPNLAQKD). Ser608 carries the post-translational modification Phosphoserine. Polar residues-rich tracts occupy residues 635–650 (DTRQSREMLSTHSSPY) and 663–674 (MPTTPVLTRNAY). Residues 675 to 685 (SSSHLEPESSS) are compositionally biased toward low complexity. Ser697 is modified (phosphoserine). Low complexity predominate over residues 713–722 (SLSKSQRSSS). A compositionally biased stretch (polar residues) spans 769–781 (QNVSTSNSGSMPN). A Glycyl lysine isopeptide (Lys-Gly) (interchain with G-Cter in SUMO2) cross-link involves residue Lys882. Disordered regions lie at residues 905–925 (RASGQKDQGHSPQTSFDSDRG) and 1004–1034 (DGTDGNQLEDNLESSEQRLFWHEDSKPGTLV). Polar residues predominate over residues 906 to 920 (ASGQKDQGHSPQTSF). Ser915 carries the post-translational modification Phosphoserine. The segment covering 1018–1034 (SEQRLFWHEDSKPGTLV) has biased composition (basic and acidic residues). A Glycyl lysine isopeptide (Lys-Gly) (interchain with G-Cter in SUMO2) cross-link involves residue Lys1029.

In terms of assembly, interacts with CYTH3. Interacts with PARD3. Interacts with CYTH1.

The protein localises to the cytoplasm. It localises to the cytoskeleton. It is found in the cell junction. Its subcellular location is the tight junction. The protein resides in the adherens junction. Member of GRP1 signaling complexes that are acutely recruited to plasma membrane ruffles in response to insulin receptor signaling. May function as a scaffolding protein that regulates epithelial cell polarity by connecting ARF6 activation with the PAR3 complex. Plays a redundant role with FRMD4A in epithelial polarization. The sequence is that of FERM domain-containing protein 4B from Homo sapiens (Human).